The following is a 197-amino-acid chain: 7-methyl-GTP pyrophosphatase (197 aa).

Aspartate 69 serves as the catalytic Proton acceptor.

This sequence belongs to the Maf family. YceF subfamily. A divalent metal cation serves as cofactor.

The protein localises to the cytoplasm. The catalysed reaction is N(7)-methyl-GTP + H2O = N(7)-methyl-GMP + diphosphate + H(+). Nucleoside triphosphate pyrophosphatase that hydrolyzes 7-methyl-GTP (m(7)GTP). May have a dual role in cell division arrest and in preventing the incorporation of modified nucleotides into cellular nucleic acids. In Pectobacterium atrosepticum (strain SCRI 1043 / ATCC BAA-672) (Erwinia carotovora subsp. atroseptica), this protein is 7-methyl-GTP pyrophosphatase.